Consider the following 373-residue polypeptide: GDP-mannose 4,6-dehydratase (373 aa).

NADP(+)-binding positions include 10 to 15 (GITGQD), 65 to 66 (DL), 87 to 91 (LGAQS), and Tyr102. The active site involves Thr134. Active-site nucleophile residues include Glu136 and Tyr158. Positions 162, 188, and 193 each coordinate NADP(+).

The protein belongs to the NAD(P)-dependent epimerase/dehydratase family. GDP-mannose 4,6-dehydratase subfamily. It depends on NADP(+) as a cofactor.

It carries out the reaction GDP-alpha-D-mannose = GDP-4-dehydro-alpha-D-rhamnose + H2O. Catalyzes the conversion of GDP-D-mannose to GDP-4-dehydro-6-deoxy-D-mannose. The polypeptide is GDP-mannose 4,6-dehydratase (Vibrio cholerae serotype O1 (strain ATCC 39315 / El Tor Inaba N16961)).